Consider the following 396-residue polypeptide: NDP-glycosyltransferase YjiC (396 aa).

Residues Asn18, Thr234, Val283, His298, and 302 to 306 (NSTME) each bind UDP.

It belongs to the UDP-glycosyltransferase family.

It carries out the reaction an NDP-glycose + an acceptor = a glycosylated acceptor + NDP.. In terms of biological role, glycosyltransferase that can glycosylate a wide range of substrates, including various flavonoids (flavones, flavonols, flavanones, flavanols, chalcones), isoflavonoids and stilbenes, to produce multiple glycosylated products. It can accept diverse nucleotide diphosphate-D/L-sugars as donors, including ADP-, GDP-, CDP-, TDP- or UDP-alpha-D-glucose, and catalyzes O-, N-, or S-glycosylation. In vitro, catalyzes the glycosylation of, among others, apigenin, 3-hydroxyflavone, phloretin or resveratrol, resulting in multiple glucosylated products, along with mono-, di-, tri- and tetraglucosides. Can also catalyze the glycosylation of the macrolide epothilone A with diverse NDP-D/L-sugars, forming different epothilone A glycoside derivatives. In Bacillus licheniformis (strain ATCC 14580 / DSM 13 / JCM 2505 / CCUG 7422 / NBRC 12200 / NCIMB 9375 / NCTC 10341 / NRRL NRS-1264 / Gibson 46), this protein is NDP-glycosyltransferase YjiC.